Consider the following 640-residue polypeptide: Threonine--tRNA ligase (640 aa).

The 61-residue stretch at 1–61 (MVKITYPDNS…MQDSTIKLIT (61 aa)) folds into the TGS domain. Residues 242–533 (DHRKLGPKLN…LIENFAGEFP (292 aa)) form a catalytic region. Positions 334, 385, and 510 each coordinate Zn(2+).

This sequence belongs to the class-II aminoacyl-tRNA synthetase family. As to quaternary structure, homodimer. Zn(2+) serves as cofactor.

It localises to the cytoplasm. It carries out the reaction tRNA(Thr) + L-threonine + ATP = L-threonyl-tRNA(Thr) + AMP + diphosphate + H(+). Its function is as follows. Catalyzes the attachment of threonine to tRNA(Thr) in a two-step reaction: L-threonine is first activated by ATP to form Thr-AMP and then transferred to the acceptor end of tRNA(Thr). Also edits incorrectly charged L-seryl-tRNA(Thr). This chain is Threonine--tRNA ligase, found in Petrotoga mobilis (strain DSM 10674 / SJ95).